We begin with the raw amino-acid sequence, 137 residues long: MNNLIITTRQSPVRLLVDYVATTILWTLFALFIFLFAMDLLTGYYWQSEARSRLQFYFLLAVANAVVLIVWALYNKLRFQKQQHHAAYQYTPQEYAESLAIPDELYQQLQKSHRMSVHFTSQGQIKMVVSEKALVRA.

Over 1–23 (MNNLIITTRQSPVRLLVDYVATT) the chain is Cytoplasmic. The chain crosses the membrane as a helical span at residues 24–44 (ILWTLFALFIFLFAMDLLTGY). Residues 45-53 (YWQSEARSR) are Periplasmic-facing. A helical membrane pass occupies residues 54–74 (LQFYFLLAVANAVVLIVWALY). Residues 75-137 (NKLRFQKQQH…VVSEKALVRA (63 aa)) lie on the Cytoplasmic side of the membrane.

It localises to the cell inner membrane. Its function is as follows. Required for the synthesis of poly-beta-1,6-N-acetyl-D-glucosamine (PGA), a biofilm adhesin polysaccharide. May assist the glycosyltransferase PgaC in the polymerization of PGA. In Escherichia coli (strain K12), this protein is Biofilm PGA synthesis protein PgaD (pgaD).